The following is a 66-amino-acid chain: Large ribosomal subunit protein bL31 (66 aa).

Zn(2+)-binding residues include Cys-16, Cys-18, Cys-36, and Cys-39.

Belongs to the bacterial ribosomal protein bL31 family. Type A subfamily. Part of the 50S ribosomal subunit. It depends on Zn(2+) as a cofactor.

In terms of biological role, binds the 23S rRNA. This chain is Large ribosomal subunit protein bL31, found in Geobacillus kaustophilus (strain HTA426).